A 714-amino-acid chain; its full sequence is Transcription activator of gluconeogenesis UREG_00958 (714 aa).

Positions 1-71 are disordered; that stretch reads MTSNARNGPL…NAKDPLRPRR (71 aa). Positions 38 to 62 are enriched in polar residues; the sequence is ESQTQVENSSTKQPNGQTKPMSASN. The segment at residues 78 to 106 is a DNA-binding region (zn(2)-C6 fungal-type); the sequence is CFACQRAHLTCGDERPCQRCIKRGIQNSC. Disordered regions lie at residues 176-228, 274-312, and 539-567; these read SLSQ…NASG, GAGD…TAQP, and NTGG…VNPS. Polar residues predominate over residues 191 to 228; that stretch reads FPSQSPVSPTFSITANSATSGNQNMPSSLPASNGNASG. The segment covering 545–555 has biased composition (low complexity); that stretch reads GSTSGTSSRGS.

It belongs to the ERT1/acuK family.

It is found in the nucleus. In terms of biological role, transcription factor which regulates nonfermentable carbon utilization. Activator of gluconeogenetic genes. The chain is Transcription activator of gluconeogenesis UREG_00958 from Uncinocarpus reesii (strain UAMH 1704).